Consider the following 163-residue polypeptide: Crossover junction endodeoxyribonuclease RuvC (163 aa).

Active-site residues include Asp7, Glu66, and Asp139. Residues Asp7, Glu66, and Asp139 each contribute to the Mg(2+) site.

The protein belongs to the RuvC family. In terms of assembly, homodimer which binds Holliday junction (HJ) DNA. The HJ becomes 2-fold symmetrical on binding to RuvC with unstacked arms; it has a different conformation from HJ DNA in complex with RuvA. In the full resolvosome a probable DNA-RuvA(4)-RuvB(12)-RuvC(2) complex forms which resolves the HJ. It depends on Mg(2+) as a cofactor.

The protein localises to the cytoplasm. It carries out the reaction Endonucleolytic cleavage at a junction such as a reciprocal single-stranded crossover between two homologous DNA duplexes (Holliday junction).. Its function is as follows. The RuvA-RuvB-RuvC complex processes Holliday junction (HJ) DNA during genetic recombination and DNA repair. Endonuclease that resolves HJ intermediates. Cleaves cruciform DNA by making single-stranded nicks across the HJ at symmetrical positions within the homologous arms, yielding a 5'-phosphate and a 3'-hydroxyl group; requires a central core of homology in the junction. The consensus cleavage sequence is 5'-(A/T)TT(C/G)-3'. Cleavage occurs on the 3'-side of the TT dinucleotide at the point of strand exchange. HJ branch migration catalyzed by RuvA-RuvB allows RuvC to scan DNA until it finds its consensus sequence, where it cleaves and resolves the cruciform DNA. In Thermomicrobium roseum (strain ATCC 27502 / DSM 5159 / P-2), this protein is Crossover junction endodeoxyribonuclease RuvC.